Here is a 25-residue protein sequence, read N- to C-terminus: VIGGTNASPGEIPWQLSQQRQSGSW.

The Peptidase S1 domain occupies 1 to 25 (VIGGTNASPGEIPWQLSQQRQSGSW). Positions 1–25 (VIGGTNASPGEIPWQLSQQRQSGSW) are disordered. A compositionally biased stretch (polar residues) spans 15 to 25 (QLSQQRQSGSW).

This sequence belongs to the peptidase S1 family. Heterodimer of a large and a small subunit held together by hydrophobic interactions.

In terms of biological role, cleaves the carboxyl side of basic amino acids, small neutral amino acids, and Met residue. It is also a plasminogen activator. The sequence is that of Fibrinolytic enzyme large subunit from Eisenia fetida (Red wiggler worm).